The following is a 221-amino-acid chain: uncharacterized protein (221 aa).

6 helical membrane-spanning segments follow: residues Y33–I55, F70–V92, L99–I121, Y125–L147, Y154–I176, and I186–I208.

The protein resides in the cell membrane. This is an uncharacterized protein from Aquifex aeolicus (strain VF5).